The primary structure comprises 118 residues: HTH-type transcriptional regulator SarT (118 aa).

A DNA-binding region (H-T-H motif) is located at residues 55 to 78 (MRDIISYIGIDQSRIVKSVKDLSK).

The protein belongs to the SarA family.

It localises to the cytoplasm. In terms of biological role, transcriptional regulator acting as an intermediary between major regulators sarA and agr and virulence genes. Represses alpha-hemolysin (hla) gene expression. Down-regulates agr RNAIII expression by repressing sarU, a positive activator of agr expression. Up-regulates sarS, which induces the expression of the cell wall-associated protein A (spa). The chain is HTH-type transcriptional regulator SarT (sarT) from Staphylococcus aureus (strain NCTC 8325 / PS 47).